Reading from the N-terminus, the 473-residue chain is Chromosomal replication initiator protein DnaA (473 aa).

Residues 1 to 73 (MTNIEQDRWS…LSCWQAEMPQ (73 aa)) form a domain I, interacts with DnaA modulators region. The interval 73-129 (QVHRVDLTVRTAMRCAAPAKDAPAHAEPRRDDGRPAPELRATAIAPVSATHEALGGS) is domain II. The segment at 130-352 (PLDPRLTFGS…GAINRLLAHS (223 aa)) is domain III, AAA+ region. Positions 177, 179, 180, and 181 each coordinate ATP. Residues 353-473 (KLNAQPVTLE…VELLKRQLQE (121 aa)) are domain IV, binds dsDNA.

The protein belongs to the DnaA family. Oligomerizes as a right-handed, spiral filament on DNA at oriC.

The protein localises to the cytoplasm. Its function is as follows. Plays an essential role in the initiation and regulation of chromosomal replication. ATP-DnaA binds to the origin of replication (oriC) to initiate formation of the DNA replication initiation complex once per cell cycle. Binds the DnaA box (a 9 base pair repeat at the origin) and separates the double-stranded (ds)DNA. Forms a right-handed helical filament on oriC DNA; dsDNA binds to the exterior of the filament while single-stranded (ss)DNA is stabiized in the filament's interior. The ATP-DnaA-oriC complex binds and stabilizes one strand of the AT-rich DNA unwinding element (DUE), permitting loading of DNA polymerase. After initiation quickly degrades to an ADP-DnaA complex that is not apt for DNA replication. Binds acidic phospholipids. The polypeptide is Chromosomal replication initiator protein DnaA (Rhodopseudomonas palustris (strain BisB18)).